Reading from the N-terminus, the 242-residue chain is Large ribosomal subunit protein uL1 (242 aa).

This sequence belongs to the universal ribosomal protein uL1 family. As to quaternary structure, part of the 50S ribosomal subunit.

Binds directly to 23S rRNA. The L1 stalk is quite mobile in the ribosome, and is involved in E site tRNA release. Its function is as follows. Protein L1 is also a translational repressor protein, it controls the translation of the L11 operon by binding to its mRNA. The sequence is that of Large ribosomal subunit protein uL1 from Dictyoglomus thermophilum (strain ATCC 35947 / DSM 3960 / H-6-12).